The following is a 215-amino-acid chain: Large ribosomal subunit protein uL4 (215 aa).

The segment at 43 to 101 (HQRQGTSKTKERGEVRGSGRKLYRQKGTGNARVGDAQSPIRRGGGRAHGARPRDYAHDL) is disordered. Basic and acidic residues predominate over residues 50 to 59 (KTKERGEVRG).

It belongs to the universal ribosomal protein uL4 family. In terms of assembly, part of the 50S ribosomal subunit.

Functionally, one of the primary rRNA binding proteins, this protein initially binds near the 5'-end of the 23S rRNA. It is important during the early stages of 50S assembly. It makes multiple contacts with different domains of the 23S rRNA in the assembled 50S subunit and ribosome. Forms part of the polypeptide exit tunnel. The chain is Large ribosomal subunit protein uL4 from Salinibacter ruber (strain DSM 13855 / M31).